The primary structure comprises 283 residues: 4-diphosphocytidyl-2-C-methyl-D-erythritol kinase (283 aa).

Lys-10 is a catalytic residue. 99-109 (PMGGGLGGGSS) is a binding site for ATP. Residue Asp-141 is part of the active site.

Belongs to the GHMP kinase family. IspE subfamily. As to quaternary structure, homodimer.

The enzyme catalyses 4-CDP-2-C-methyl-D-erythritol + ATP = 4-CDP-2-C-methyl-D-erythritol 2-phosphate + ADP + H(+). The protein operates within isoprenoid biosynthesis; isopentenyl diphosphate biosynthesis via DXP pathway; isopentenyl diphosphate from 1-deoxy-D-xylulose 5-phosphate: step 3/6. Functionally, catalyzes the phosphorylation of the position 2 hydroxy group of 4-diphosphocytidyl-2C-methyl-D-erythritol. This Escherichia coli O7:K1 (strain IAI39 / ExPEC) protein is 4-diphosphocytidyl-2-C-methyl-D-erythritol kinase.